The following is a 282-amino-acid chain: Proteasome subunit beta (282 aa).

The propeptide at 1-54 is removed in mature form; by autocatalysis; it reads MGSHRDLPAGMVNHIFTNSGISSFTEFVGSYAPDLLPGRNETLAAPVGDRIPHA. Threonine 55 serves as the catalytic Nucleophile.

It belongs to the peptidase T1B family. The 20S proteasome core is composed of 14 alpha and 14 beta subunits that assemble into four stacked heptameric rings, resulting in a barrel-shaped structure. The two inner rings, each composed of seven catalytic beta subunits, are sandwiched by two outer rings, each composed of seven alpha subunits. The catalytic chamber with the active sites is on the inside of the barrel. Has a gated structure, the ends of the cylinder being occluded by the N-termini of the alpha-subunits. Is capped by the proteasome-associated ATPase, ARC.

The protein resides in the cytoplasm. It carries out the reaction Cleavage of peptide bonds with very broad specificity.. It participates in protein degradation; proteasomal Pup-dependent pathway. With respect to regulation, the formation of the proteasomal ATPase ARC-20S proteasome complex, likely via the docking of the C-termini of ARC into the intersubunit pockets in the alpha-rings, may trigger opening of the gate for substrate entry. Interconversion between the open-gate and close-gate conformations leads to a dynamic regulation of the 20S proteasome proteolysis activity. Functionally, component of the proteasome core, a large protease complex with broad specificity involved in protein degradation. This is Proteasome subunit beta from Streptosporangium roseum (strain ATCC 12428 / DSM 43021 / JCM 3005 / KCTC 9067 / NCIMB 10171 / NRRL 2505 / NI 9100).